We begin with the raw amino-acid sequence, 185 residues long: Ribonuclease HII (185 aa).

Residues 1-185 (MIILGIDEAG…KSYKPIQLLL (185 aa)) enclose the RNase H type-2 domain. Residues D7, E8, and D99 each contribute to the a divalent metal cation site.

It belongs to the RNase HII family. The cofactor is Mn(2+). Mg(2+) serves as cofactor.

Its subcellular location is the cytoplasm. The catalysed reaction is Endonucleolytic cleavage to 5'-phosphomonoester.. Its function is as follows. Endonuclease that specifically degrades the RNA of RNA-DNA hybrids. This Francisella philomiragia subsp. philomiragia (strain ATCC 25017 / CCUG 19701 / FSC 153 / O#319-036) protein is Ribonuclease HII.